The primary structure comprises 195 residues: Glycerol-3-phosphate acyltransferase (195 aa).

Helical transmembrane passes span 3–23, 52–72, 80–100, 113–133, and 147–167; these read FQVV…GFIL, LALL…AIAQ, ILFL…YLFF, LIFI…ICFL, and LIAL…IFAI.

Belongs to the PlsY family. As to quaternary structure, probably interacts with PlsX.

The protein resides in the cell inner membrane. The catalysed reaction is an acyl phosphate + sn-glycerol 3-phosphate = a 1-acyl-sn-glycero-3-phosphate + phosphate. It functions in the pathway lipid metabolism; phospholipid metabolism. Functionally, catalyzes the transfer of an acyl group from acyl-phosphate (acyl-PO(4)) to glycerol-3-phosphate (G3P) to form lysophosphatidic acid (LPA). This enzyme utilizes acyl-phosphate as fatty acyl donor, but not acyl-CoA or acyl-ACP. In Ehrlichia ruminantium (strain Gardel), this protein is Glycerol-3-phosphate acyltransferase.